The sequence spans 252 residues: Chlorophyll a-b binding protein P4, chloroplastic (252 aa).

Tryptophan 56 contacts chlorophyll b. 2 residues coordinate chlorophyll a: phenylalanine 76 and glutamate 95. Arginine 100 lines the chlorophyll b pocket. A run of 2 helical transmembrane segments spans residues 101-121 (WAML…IGII) and 134-154 (YFAS…YVEI). Chlorophyll b-binding residues include serine 137, valine 143, glutamate 153, and arginine 156. 6 residues coordinate chlorophyll a: lysine 203, glutamate 204, asparagine 207, arginine 209, glutamine 221, and histidine 236.

It belongs to the light-harvesting chlorophyll a/b-binding (LHC) protein family. In terms of assembly, the LHC complex consists of chlorophyll a-b binding proteins. The cofactor is Binds at least 14 chlorophylls (8 Chl-a and 6 Chl-b) and carotenoids such as lutein and neoxanthin.. Post-translationally, photoregulated by reversible phosphorylation of its threonine residues.

Its subcellular location is the plastid. The protein localises to the chloroplast thylakoid membrane. Its function is as follows. The light-harvesting complex (LHC) functions as a light receptor, it captures and delivers excitation energy to photosystems with which it is closely associated. In terms of biological role, may channel protons produced in the catalytic Mn center of water oxidation into the thylakoid lumen. The sequence is that of Chlorophyll a-b binding protein P4, chloroplastic from Pisum sativum (Garden pea).